Consider the following 130-residue polypeptide: Small ribosomal subunit protein uS8 (130 aa).

This sequence belongs to the universal ribosomal protein uS8 family. In terms of assembly, part of the 30S ribosomal subunit. Contacts proteins S5 and S12.

Functionally, one of the primary rRNA binding proteins, it binds directly to 16S rRNA central domain where it helps coordinate assembly of the platform of the 30S subunit. This is Small ribosomal subunit protein uS8 from Shewanella frigidimarina (strain NCIMB 400).